Consider the following 1291-residue polypeptide: Ethylene-insensitive protein 2.2 (1291 aa).

6 helical membrane-spanning segments follow: residues 18–38, 48–68, 96–116, 128–148, 155–175, and 195–215; these read ALPA…PGKW, FGFD…LCQY, FLGV…ILGI, LSTC…FATL, SFLS…GVLI, and SAFA…FFLH. The N-linked (GlcNAc...) asparagine glycan is linked to asparagine 227. The next 7 membrane-spanning stretches (helical) occupy residues 231–251, 253–273, 288–308, 335–355, 356–376, 393–413, and 441–461; these read GALC…IYLV, YVLM…LLTF, VALC…ALTW, IIAV…GIYQ, LLIF…IPLF, FLEF…IIFV, and VLLI…ATPL. The interval 498–518 is disordered; sequence TEEESIGGQEQLSGPGKSAES. A glycan (N-linked (GlcNAc...) asparagine) is linked at asparagine 550. The interval 614–662 is disordered; it reads AEKEDDEGDSWEPEESSKGVPGSTSSLTSDGPGSFRSLSGKSDEGGNGA. Over residues 617 to 627 the composition is skewed to acidic residues; that stretch reads EDDEGDSWEPE. Polar residues predominate over residues 635-653; the sequence is GSTSSLTSDGPGSFRSLSG. Phosphoserine is present on residues serine 647 and serine 664. Disordered stretches follow at residues 742 to 768 and 787 to 808; these read QIHS…GGQR and GPSR…TLPS. The segment covering 759 to 768 has biased composition (polar residues); sequence NIDSSYGGQR. A Phosphothreonine modification is found at threonine 818. The segment at 836 to 856 is disordered; sequence GSSSLNGQMDSPAPISPSLGP. N-linked (GlcNAc...) asparagine glycosylation occurs at asparagine 891. Residue serine 923 is modified to Phosphoserine. A glycan (N-linked (GlcNAc...) asparagine) is linked at asparagine 1027. The tract at residues 1210–1229 is disordered; it reads HRSSPPVSNGMLPPASKPGR. The Nuclear localization signal motif lies at 1262–1269; that stretch reads DVAFPKGK.

Belongs to the NRAMP (TC 2.A.55) family.

Its subcellular location is the endoplasmic reticulum membrane. It localises to the nucleus. It is found in the cytoplasm. In terms of biological role, central factor in signaling pathways regulated by ethylene (ET) and involved in various processes including development, plant defense, senescence, nucleotide sugar flux, and tropisms. Functionally, trafficking signal inducing ethylene response. The nuclear localization is both necessary and sufficient to activate EIN3-mediated transcription and ethylene responses. This chain is Ethylene-insensitive protein 2.2, found in Populus trichocarpa (Western balsam poplar).